Consider the following 270-residue polypeptide: 3-methyl-2-oxobutanoate hydroxymethyltransferase (270 aa).

The Mg(2+) site is built by D43 and D82. 3-methyl-2-oxobutanoate is bound by residues 43-44, D82, and K112; that span reads DS. E114 lines the Mg(2+) pocket. E179 (proton acceptor) is an active-site residue.

This sequence belongs to the PanB family. As to quaternary structure, homodecamer; pentamer of dimers. Mg(2+) serves as cofactor.

It localises to the cytoplasm. It carries out the reaction 3-methyl-2-oxobutanoate + (6R)-5,10-methylene-5,6,7,8-tetrahydrofolate + H2O = 2-dehydropantoate + (6S)-5,6,7,8-tetrahydrofolate. Its pathway is cofactor biosynthesis; (R)-pantothenate biosynthesis; (R)-pantoate from 3-methyl-2-oxobutanoate: step 1/2. Functionally, catalyzes the reversible reaction in which hydroxymethyl group from 5,10-methylenetetrahydrofolate is transferred onto alpha-ketoisovalerate to form ketopantoate. The chain is 3-methyl-2-oxobutanoate hydroxymethyltransferase from Staphylococcus saprophyticus subsp. saprophyticus (strain ATCC 15305 / DSM 20229 / NCIMB 8711 / NCTC 7292 / S-41).